The following is an 80-amino-acid chain: uncharacterized protein (80 aa).

2 4Fe-4S ferredoxin-type domains span residues 21-49 (KIIE…AIKN) and 50-80 (NRVV…LYDA). Positions 30, 33, 36, 40, 60, 63, 66, and 70 each coordinate [4Fe-4S] cluster.

[4Fe-4S] cluster serves as cofactor.

This is an uncharacterized protein from Methanocaldococcus jannaschii (strain ATCC 43067 / DSM 2661 / JAL-1 / JCM 10045 / NBRC 100440) (Methanococcus jannaschii).